Consider the following 184-residue polypeptide: ATP synthase subunit b, chloroplastic (184 aa).

The helical transmembrane segment at 27–49 (LATNLINLSVVLGVLIFFGKGVL) threads the bilayer.

Belongs to the ATPase B chain family. As to quaternary structure, F-type ATPases have 2 components, F(1) - the catalytic core - and F(0) - the membrane proton channel. F(1) has five subunits: alpha(3), beta(3), gamma(1), delta(1), epsilon(1). F(0) has four main subunits: a(1), b(1), b'(1) and c(10-14). The alpha and beta chains form an alternating ring which encloses part of the gamma chain. F(1) is attached to F(0) by a central stalk formed by the gamma and epsilon chains, while a peripheral stalk is formed by the delta, b and b' chains.

The protein resides in the plastid. The protein localises to the chloroplast thylakoid membrane. Its function is as follows. F(1)F(0) ATP synthase produces ATP from ADP in the presence of a proton or sodium gradient. F-type ATPases consist of two structural domains, F(1) containing the extramembraneous catalytic core and F(0) containing the membrane proton channel, linked together by a central stalk and a peripheral stalk. During catalysis, ATP synthesis in the catalytic domain of F(1) is coupled via a rotary mechanism of the central stalk subunits to proton translocation. Functionally, component of the F(0) channel, it forms part of the peripheral stalk, linking F(1) to F(0). The sequence is that of ATP synthase subunit b, chloroplastic from Liriodendron tulipifera (Tuliptree).